A 311-amino-acid polypeptide reads, in one-letter code: Probable manganese-dependent inorganic pyrophosphatase (311 aa).

Mn(2+)-binding residues include His9, Asp13, Asp15, Asp75, His97, and Asp149.

This sequence belongs to the PPase class C family. Mn(2+) serves as cofactor.

The protein localises to the cytoplasm. The catalysed reaction is diphosphate + H2O = 2 phosphate + H(+). In Lactobacillus delbrueckii subsp. bulgaricus (strain ATCC BAA-365 / Lb-18), this protein is Probable manganese-dependent inorganic pyrophosphatase.